Reading from the N-terminus, the 122-residue chain is uncharacterized protein (122 aa).

Thr55 bears the Phosphothreonine mark. Phosphoserine is present on residues Ser72, Ser86, Ser96, Ser112, and Ser118.

It localises to the cytoplasm. This is an uncharacterized protein from Homo sapiens (Human).